The chain runs to 704 residues: Serotransferrin (704 aa).

The first 19 residues, 1–19 (MRPAVRALLACAVLGLCLA), serve as a signal peptide directing secretion. 2 consecutive Transferrin-like domains span residues 25–351 (VRWC…NLRE) and 364–689 (VKWC…NLRQ). 2 cysteine pairs are disulfide-bonded: Cys-28/Cys-66 and Cys-38/Cys-57. Arg-42 bears the Dimethylated arginine mark. Positions 81 and 113 each coordinate Fe(3+). 5 disulfides stabilise this stretch: Cys-136–Cys-217, Cys-176–Cys-192, Cys-179–Cys-200, Cys-189–Cys-202, and Cys-250–Cys-264. Hydrogencarbonate-binding residues include Thr-138, Arg-142, Ala-144, and Gly-145. Tyr-211 contributes to the Fe(3+) binding site. A Fe(3+)-binding site is contributed by His-272. 11 disulfide bridges follow: Cys-362-Cys-622, Cys-367-Cys-399, Cys-377-Cys-390, Cys-424-Cys-699, Cys-441-Cys-663, Cys-473-Cys-549, Cys-497-Cys-690, Cys-507-Cys-521, Cys-518-Cys-532, Cys-589-Cys-603, and Cys-641-Cys-646. 2 residues coordinate Fe(3+): Asp-414 and Tyr-449. Residues Thr-475, Arg-479, Ala-481, and Gly-482 each contribute to the hydrogencarbonate site. N-linked (GlcNAc...) asparagine glycosylation is present at Asn-514. A Fe(3+)-binding site is contributed by Tyr-543. His-611 provides a ligand contact to Fe(3+). Residue Ser-691 is modified to Phosphoserine.

The protein belongs to the transferrin family. As to quaternary structure, monomer. Part of a complex composed of SLC40A1/ferroportin, TF/transferrin and HEPH/hephaestin that transfers iron from cells to transferrin. Expressed by the liver and secreted in plasma.

Its subcellular location is the secreted. Functionally, transferrins are iron binding transport proteins which can bind two Fe(3+) ions in association with the binding of an anion, usually bicarbonate. It is responsible for the transport of iron from sites of absorption and heme degradation to those of storage and utilization. Serum transferrin may also have a further role in stimulating cell proliferation. The chain is Serotransferrin (TF) from Bos taurus (Bovine).